The primary structure comprises 251 residues: GTP cyclohydrolase 1 type 2 homolog (251 aa).

Residues His-63, His-64, Asp-101, His-219, and Glu-223 each contribute to the a divalent metal cation site.

Belongs to the GTP cyclohydrolase I type 2/NIF3 family. In terms of assembly, homohexamer.

This is GTP cyclohydrolase 1 type 2 homolog from Pasteurella multocida (strain Pm70).